A 116-amino-acid chain; its full sequence is MESNLTTPAIVIFATAGCTDVWGDVLLGIEEEGIPFVIQESPSTDVIHNAWLAACQSPLLVGIGCSREKLVVHYKNLPTSAPLFTLTYQQDNHARRSIGNNAARLVKGIPFRECHS.

Position 31 (Glu31) interacts with Mg(2+).

The protein belongs to the DdrB/PduH family. As to quaternary structure, forms a heterotetramer PduG(2)/PduH(2). Mg(2+) serves as cofactor.

The protein resides in the bacterial microcompartment. It carries out the reaction ATP + H2O = ADP + phosphate + H(+). The protein operates within polyol metabolism; 1,2-propanediol degradation. Its function is as follows. Small subunit of the propanediol dehydratase-reactivating factor (DDR), which reactivates suicidally inhibited adenosylcobalamin-dependent propanediol dehydratase (diol dehydratase, DDH) found in the bacterial microcompartment (BMC) dedicated to 1,2-propanediol (1,2-PD) degradation. Reactivates inactivated DDH in the presence of ATP, Mg(2+) and free adenosylcobalamin (AdoCbl), by mediating the exchange of the tightly bound damaged cofactor AdoCbl for a free intact one. Expression of a cosmid containing the full 21-gene pdu operon in E.coli allows E.coli to grow on 1,2-propanediol (1,2-PD) with the appearance of bacterial microcompartments (BMC) in its cytoplasm. In terms of biological role, the 1,2-PD-specific bacterial microcompartment (BMC) concentrates low levels of 1,2-PD catabolic enzymes, concentrates volatile reaction intermediates thus enhancing pathway flux and keeps the level of toxic, mutagenic propionaldehyde low. The protein is Propanediol dehydratase-reactivating factor small subunit of Citrobacter freundii.